The primary structure comprises 271 residues: Formamidopyrimidine-DNA glycosylase (271 aa).

Residue Pro2 is the Schiff-base intermediate with DNA of the active site. The active-site Proton donor is the Glu3. The active-site Proton donor; for beta-elimination activity is Lys58. Positions 91, 110, and 152 each coordinate DNA. The segment at Arg237–Arg271 adopts an FPG-type zinc-finger fold. The active-site Proton donor; for delta-elimination activity is Arg261.

The protein belongs to the FPG family. In terms of assembly, monomer. It depends on Zn(2+) as a cofactor.

It catalyses the reaction Hydrolysis of DNA containing ring-opened 7-methylguanine residues, releasing 2,6-diamino-4-hydroxy-5-(N-methyl)formamidopyrimidine.. The catalysed reaction is 2'-deoxyribonucleotide-(2'-deoxyribose 5'-phosphate)-2'-deoxyribonucleotide-DNA = a 3'-end 2'-deoxyribonucleotide-(2,3-dehydro-2,3-deoxyribose 5'-phosphate)-DNA + a 5'-end 5'-phospho-2'-deoxyribonucleoside-DNA + H(+). In terms of biological role, involved in base excision repair of DNA damaged by oxidation or by mutagenic agents. Acts as a DNA glycosylase that recognizes and removes damaged bases. Has a preference for oxidized purines, such as 7,8-dihydro-8-oxoguanine (8-oxoG). Has AP (apurinic/apyrimidinic) lyase activity and introduces nicks in the DNA strand. Cleaves the DNA backbone by beta-delta elimination to generate a single-strand break at the site of the removed base with both 3'- and 5'-phosphates. The polypeptide is Formamidopyrimidine-DNA glycosylase (Methylococcus capsulatus (strain ATCC 33009 / NCIMB 11132 / Bath)).